The sequence spans 760 residues: ATP-dependent RNA helicase dbp7 (760 aa).

The span at 23-34 shows a compositional bias: basic and acidic residues; sequence KLKGGTWRDRLS. Positions 23 to 129 are disordered; it reads KLKGGTWRDR…EPVEDAKPTN (107 aa). Over residues 38–47 the composition is skewed to basic residues; sequence IAQHRTKNPR. Residues 58 to 72 are compositionally biased toward polar residues; sequence KGPQNPNRIQVSSSR. Basic and acidic residues predominate over residues 77 to 94; the sequence is QKTDADGDNEKSRHDNKQ. Positions 99–110 are enriched in polar residues; that stretch reads FVSSLFSKNPTP. Positions 137–166 match the Q motif motif; the sequence is DTFTNLGLSPSLAAHLLTKLELKAPTGIQK. One can recognise a Helicase ATP-binding domain in the interval 170–372; sequence SQLLKEDSDA…EISLKDAVHI (203 aa). 183 to 190 contacts ATP; the sequence is AETGSGKT. The DEAD box motif lies at 308 to 311; it reads DEGD. The Helicase C-terminal domain maps to 396-609; the sequence is QLKQSYAIVA…LTRTTAEDIL (214 aa). 2 disordered regions span residues 453 to 490 and 692 to 760; these read YRDE…AVAF and SKIN…FNLA. A compositionally biased stretch (acidic residues) spans 456–470; sequence ESEDEDEEKEDDDED. The span at 701-716 shows a compositional bias: basic and acidic residues; the sequence is PGDKEAKKDYKAERNT. Over residues 731-740 the composition is skewed to polar residues; the sequence is QPSNDATSAA.

It belongs to the DEAD box helicase family. DDX31/DBP7 subfamily.

The protein localises to the nucleus. The protein resides in the nucleolus. It carries out the reaction ATP + H2O = ADP + phosphate + H(+). Its function is as follows. ATP-binding RNA helicase involved in the biogenesis of 60S ribosomal subunits and is required for the normal formation of 25S and 5.8S rRNAs. This chain is ATP-dependent RNA helicase dbp7 (dbp7), found in Aspergillus oryzae (strain ATCC 42149 / RIB 40) (Yellow koji mold).